The chain runs to 363 residues: DNA primase small subunit PriS (363 aa).

Residues aspartate 105, aspartate 107, and aspartate 265 contribute to the active site.

This sequence belongs to the eukaryotic-type primase small subunit family. As to quaternary structure, heterodimer of a small subunit (PriS) and a large subunit (PriL). Mg(2+) serves as cofactor. It depends on Mn(2+) as a cofactor.

Catalytic subunit of DNA primase, an RNA polymerase that catalyzes the synthesis of short RNA molecules used as primers for DNA polymerase during DNA replication. The small subunit contains the primase catalytic core and has DNA synthesis activity on its own. Binding to the large subunit stabilizes and modulates the activity, increasing the rate of DNA synthesis while decreasing the length of the DNA fragments, and conferring RNA synthesis capability. The DNA polymerase activity may enable DNA primase to also catalyze primer extension after primer synthesis. May also play a role in DNA repair. This Methanococcus maripaludis (strain C7 / ATCC BAA-1331) protein is DNA primase small subunit PriS.